Here is a 399-residue protein sequence, read N- to C-terminus: Serine/threonine-protein kinase PKZ1 (399 aa).

The segment at 30 to 50 is disordered; sequence PMQCAYQTQSHSNPEGAKRGR. In terms of domain architecture, Protein kinase spans 92–371; that stretch reads WQLFDQIGAG…ADQMLQHPWM (280 aa). ATP contacts are provided by residues 98-106 and K121; that span reads IGAGAFGVV. The active-site Proton acceptor is D219.

Belongs to the protein kinase superfamily. CAMK Ser/Thr protein kinase family.

It catalyses the reaction L-seryl-[protein] + ATP = O-phospho-L-seryl-[protein] + ADP + H(+). The enzyme catalyses L-threonyl-[protein] + ATP = O-phospho-L-threonyl-[protein] + ADP + H(+). Its function is as follows. May regulate an early stage of the zoospore pathway. The polypeptide is Serine/threonine-protein kinase PKZ1 (Phytophthora infestans (strain T30-4) (Potato late blight agent)).